Reading from the N-terminus, the 121-residue chain is Large ribosomal subunit protein bL12 (121 aa).

Belongs to the bacterial ribosomal protein bL12 family. Homodimer. Part of the ribosomal stalk of the 50S ribosomal subunit. Forms a multimeric L10(L12)X complex, where L10 forms an elongated spine to which 2 to 4 L12 dimers bind in a sequential fashion. Binds GTP-bound translation factors.

Its function is as follows. Forms part of the ribosomal stalk which helps the ribosome interact with GTP-bound translation factors. Is thus essential for accurate translation. This is Large ribosomal subunit protein bL12 from Psychromonas ingrahamii (strain DSM 17664 / CCUG 51855 / 37).